The sequence spans 223 residues: Deoxyribose-phosphate aldolase (223 aa).

Aspartate 92 (proton donor/acceptor) is an active-site residue. Lysine 153 (schiff-base intermediate with acetaldehyde) is an active-site residue. The active-site Proton donor/acceptor is lysine 182.

The protein belongs to the DeoC/FbaB aldolase family. DeoC type 1 subfamily.

It localises to the cytoplasm. The enzyme catalyses 2-deoxy-D-ribose 5-phosphate = D-glyceraldehyde 3-phosphate + acetaldehyde. Its pathway is carbohydrate degradation; 2-deoxy-D-ribose 1-phosphate degradation; D-glyceraldehyde 3-phosphate and acetaldehyde from 2-deoxy-alpha-D-ribose 1-phosphate: step 2/2. Functionally, catalyzes a reversible aldol reaction between acetaldehyde and D-glyceraldehyde 3-phosphate to generate 2-deoxy-D-ribose 5-phosphate. The chain is Deoxyribose-phosphate aldolase from Mycoplasmoides gallisepticum (strain R(low / passage 15 / clone 2)) (Mycoplasma gallisepticum).